The primary structure comprises 324 residues: MEGLEENGGVVQVGELLPCKICGRTFFPVALKKHGPICKKTATKKRKTFDSSRQRAEGTDIPTVKPLKPRPEPPKKPSNWRRKHEEFIATIRAAKGLDQALKEGGKLPPPPPPSYDPDYIQCPYCQRRFNENAADRHINFCKEQAARISNKGKFSTDTKGKPTSRTQYKPPALKKSNSPGTASSGSSRLPQPSGAGKTVVGVPSGKVSSSSSSLGNKLQTLSPSHKGIAAPHAVANVKPRNSTPPSLARNPAPGVLTNKRKTYTESYIYRPDGDSASSLNGGNIKGIEGNSPGNLSKFCHECGTKYPVEWAKFCCECGIRRMIL.

A C2HC/C3H-type 1 zinc finger spans residues 15-44 (ELLPCKICGRTFFPVALKKHGPICKKTATK). Residues C19, C22, H34, and C38 each coordinate Zn(2+). Positions 43 to 83 (TKKRKTFDSSRQRAEGTDIPTVKPLKPRPEPPKKPSNWRRK) are disordered. Residues 48-58 (TFDSSRQRAEG) are compositionally biased toward basic and acidic residues. A C2HC/C3H-type 2 zinc finger spans residues 118–147 (DYIQCPYCQRRFNENAADRHINFCKEQAAR). Residues C122, C125, H137, and C141 each contribute to the Zn(2+) site. Disordered stretches follow at residues 150–224 (NKGK…LSPS) and 236–259 (NVKP…LTNK). Low complexity-rich tracts occupy residues 176–187 (SNSPGTASSGSS) and 196–215 (GKTV…SSLG). S222 is modified (phosphoserine). A Phosphothreonine modification is found at T243. S291 is subject to Phosphoserine.

Belongs to the ZC2HC1 family. Zn(2+) serves as cofactor.

The chain is Zinc finger C2HC domain-containing protein 1A (ZC2HC1A) from Pongo abelii (Sumatran orangutan).